The following is an 882-amino-acid chain: DNA mismatch repair protein MutS (882 aa).

Residue 629–636 (GPNMGGKS) coordinates ATP.

Belongs to the DNA mismatch repair MutS family.

Its function is as follows. This protein is involved in the repair of mismatches in DNA. It is possible that it carries out the mismatch recognition step. This protein has a weak ATPase activity. The sequence is that of DNA mismatch repair protein MutS from Ralstonia pickettii (strain 12J).